Reading from the N-terminus, the 326-residue chain is Probable tRNA-dihydrouridine synthase (326 aa).

Residue 18-20 coordinates FMN; it reads PME. Cys105 serves as the catalytic Proton donor. Residues Lys143, 208 to 210, and 232 to 233 contribute to the FMN site; these read NGD and GR.

Belongs to the Dus family. Requires FMN as cofactor.

The enzyme catalyses a 5,6-dihydrouridine in tRNA + NAD(+) = a uridine in tRNA + NADH + H(+). It carries out the reaction a 5,6-dihydrouridine in tRNA + NADP(+) = a uridine in tRNA + NADPH + H(+). Catalyzes the synthesis of 5,6-dihydrouridine (D), a modified base found in the D-loop of most tRNAs, via the reduction of the C5-C6 double bond in target uridines. The chain is Probable tRNA-dihydrouridine synthase (dus) from Staphylococcus epidermidis (strain ATCC 12228 / FDA PCI 1200).